The chain runs to 269 residues: Cytochrome c oxidase subunit 3 (269 aa).

The next 7 membrane-spanning stretches (helical) occupy residues 21–41 (PWPM…GLTM), 45–65 (IGNM…SVFW), 90–110 (GFLL…WAYF), 138–160 (PLLN…HALI), 167–187 (ALSG…CQYI), 205–225 (FYAG…MLII), and 247–267 (ILYC…FYWW).

It belongs to the cytochrome c oxidase subunit 3 family. As to quaternary structure, component of the cytochrome c oxidase (complex IV, CIV), a multisubunit enzyme composed of a catalytic core of 3 subunits and several supernumerary subunits. The complex exists as a monomer or a dimer and forms supercomplexes (SCs) in the inner mitochondrial membrane with ubiquinol-cytochrome c oxidoreductase (cytochrome b-c1 complex, complex III, CIII).

The protein localises to the mitochondrion inner membrane. It carries out the reaction 4 Fe(II)-[cytochrome c] + O2 + 8 H(+)(in) = 4 Fe(III)-[cytochrome c] + 2 H2O + 4 H(+)(out). Component of the cytochrome c oxidase, the last enzyme in the mitochondrial electron transport chain which drives oxidative phosphorylation. The respiratory chain contains 3 multisubunit complexes succinate dehydrogenase (complex II, CII), ubiquinol-cytochrome c oxidoreductase (cytochrome b-c1 complex, complex III, CIII) and cytochrome c oxidase (complex IV, CIV), that cooperate to transfer electrons derived from NADH and succinate to molecular oxygen, creating an electrochemical gradient over the inner membrane that drives transmembrane transport and the ATP synthase. Cytochrome c oxidase is the component of the respiratory chain that catalyzes the reduction of oxygen to water. Electrons originating from reduced cytochrome c in the intermembrane space (IMS) are transferred via the dinuclear copper A center (CU(A)) of subunit 2 and heme A of subunit 1 to the active site in subunit 1, a binuclear center (BNC) formed by heme A3 and copper B (CU(B)). The BNC reduces molecular oxygen to 2 water molecules using 4 electrons from cytochrome c in the IMS and 4 protons from the mitochondrial matrix. This Candida glabrata (strain ATCC 2001 / BCRC 20586 / JCM 3761 / NBRC 0622 / NRRL Y-65 / CBS 138) (Yeast) protein is Cytochrome c oxidase subunit 3 (COX3).